Consider the following 281-residue polypeptide: Orotidine 5'-phosphate decarboxylase (281 aa).

Residue Lys-94 is the Proton donor of the active site.

This sequence belongs to the OMP decarboxylase family. Type 2 subfamily.

It catalyses the reaction orotidine 5'-phosphate + H(+) = UMP + CO2. The protein operates within pyrimidine metabolism; UMP biosynthesis via de novo pathway; UMP from orotate: step 2/2. This chain is Orotidine 5'-phosphate decarboxylase, found in Thermomicrobium roseum (strain ATCC 27502 / DSM 5159 / P-2).